The chain runs to 481 residues: Innexin inx6 (481 aa).

Residues 1-21 (MYAAVKPLSNYLRLKTVRIYD) are Cytoplasmic-facing. A helical membrane pass occupies residues 22–42 (PIFTLHSKCTIVILLTCTFLL). Residues 43-144 (SAKQYFGEPI…VTKRMYLRYY (102 aa)) lie on the Extracellular side of the membrane. Residues 145–165 (QWVFMILLFQSLLFYFPSFLW) form a helical membrane-spanning segment. Residues 166-220 (KVWEGQRMEQLCCEVGDALIVEATYRTRLQMLTRYFRAQFAPIHWCYSIKYAFCE) are Cytoplasmic-facing. The chain crosses the membrane as a helical span at residues 221–241 (LLNVFISILNFWLMDVVFNGF). The Extracellular portion of the chain corresponds to 242–302 (WYKYIHALAA…VLPLNILNEK (61 aa)). The chain crosses the membrane as a helical span at residues 303–323 (IFAVLYVWFLFIALLAIMNIL). The Cytoplasmic portion of the chain corresponds to 324 to 481 (YRLLVICCPE…MDRFFHESHA (158 aa)).

It belongs to the pannexin family. In terms of tissue distribution, uniform expression in the imaginal wing disk. Expressed in an outer layer of the pupal developing CNS. Also expressed in pupal retina: cone cells and primary pigment cells.

It localises to the cell membrane. The protein localises to the cell junction. The protein resides in the gap junction. Its function is as follows. Structural components of the gap junctions. The polypeptide is Innexin inx6 (Inx6) (Drosophila melanogaster (Fruit fly)).